Here is a 375-residue protein sequence, read N- to C-terminus: Protein abhd-3.2 (375 aa).

An AB hydrolase-1 domain is found at 108-203 (PIVVFLPGIT…ILWNYLAMTG (96 aa)). Active-site charge relay system residues include Ser189, Asp315, and His344.

The protein belongs to the AB hydrolase superfamily. AB hydrolase 4 family.

The chain is Protein abhd-3.2 from Caenorhabditis elegans.